A 614-amino-acid chain; its full sequence is Vitamin B12 transporter BtuB (614 aa).

Positions M1–A20 are cleaved as a signal peptide. Positions D26–N33 match the TonB box motif. The TBDR plug domain occupies P38–T152. Cyanocob(III)alamin contacts are provided by residues L83, S85, N92, and V110–S111. The TBDR beta-barrel domain occupies H155–F614. The next 3 membrane-spanning stretches (beta stranded) occupy residues T158–G165, Y169–Q178, and T184–T195. D199, Q211, D213, and D215 together coordinate Ca(2+). 2 consecutive transmembrane segments (beta stranded) span residues F217 to E227 and D232 to N248. Ca(2+) is bound by residues Y249 and D250. Cyanocob(III)alamin is bound at residue A251. D261 contacts Ca(2+). 14 beta stranded membrane passes run R263 to N277, E279 to N296, T309 to I325, H328 to W337, Y353 to G369, F371 to D381, F385 to I400, Y403 to N417, K434 to E443, V449 to N458, Y473 to F490, P494 to A509, R517 to W529, and D535 to D550. Residue T309 coordinates cyanocob(III)alamin. R517 lines the cyanocob(III)alamin pocket. Y551 contributes to the cyanocob(III)alamin binding site. The next 3 membrane-spanning stretches (beta stranded) occupy residues T558 to A572, I585 to V596, and A602 to F614. Positions Y597–F614 match the TonB C-terminal box motif.

This sequence belongs to the TonB-dependent receptor family. BtuB (TC 1.B.14.3.1) subfamily.

The protein localises to the cell outer membrane. Involved in the active translocation of vitamin B12 (cyanocobalamin) across the outer membrane to the periplasmic space. It derives its energy for transport by interacting with the trans-periplasmic membrane protein TonB. This chain is Vitamin B12 transporter BtuB, found in Escherichia coli O6:K15:H31 (strain 536 / UPEC).